The sequence spans 177 residues: Inorganic pyrophosphatase (177 aa).

3 residues coordinate substrate: K34, R48, and Y60. The Mg(2+) site is built by D70, D75, and D107. Y144 is a binding site for substrate.

Belongs to the PPase family. In terms of assembly, homohexamer. Mg(2+) serves as cofactor.

Its subcellular location is the cytoplasm. It carries out the reaction diphosphate + H2O = 2 phosphate + H(+). In terms of biological role, catalyzes the hydrolysis of inorganic pyrophosphate (PPi) forming two phosphate ions. In Picrophilus torridus (strain ATCC 700027 / DSM 9790 / JCM 10055 / NBRC 100828 / KAW 2/3), this protein is Inorganic pyrophosphatase.